The chain runs to 698 residues: Methionine synthase reductase (698 aa).

Positions 5–147 (LLLYATQQGQ…VVEPWIAGLW (143 aa)) constitute a Flavodoxin-like domain. 93–124 (LLGLGDSEYTYFCNGGKIIDKRLQELGARHFY) is a binding site for FMN. The segment at 166–247 (ALPVASPASS…ASLNIPGLPP (82 aa)) is hinge. Ser171 and Ser189 each carry phosphoserine. The FAD-binding FR-type domain maps to 271 to 533 (DPVFQVPISK…PRTTNSFHLP (263 aa)). Lys291 contacts NADP(+). Residues 451-454 (RPYS) and 487-490 (GVCT) contribute to the FAD site. Residues 610–611 (SR), 624–626 (YVQ), and Asp659 contribute to the NADP(+) site. Residue Trp697 participates in FAD binding.

In terms of assembly, forms a multiprotein complex with MMACHC, MMADHC and MTR. FAD is required as a cofactor. The cofactor is FMN. As to expression, found in all tissues tested, particularly abundant in skeletal muscle.

It is found in the cytoplasm. It carries out the reaction 2 methylcob(III)alamin-[methionine synthase] + 2 S-adenosyl-L-homocysteine + NADP(+) + H(+) = 2 cob(II)alamin-[methionine synthase] + 2 S-adenosyl-L-methionine + NADPH. It catalyses the reaction 2 cob(II)alamin + A + 2 H2O + 2 H(+) = 2 aquacob(III)alamin + AH2. Key enzyme in methionine and folate homeostasis responsible for the reactivation of methionine synthase (MTR/MS) activity by catalyzing the reductive methylation of MTR-bound cob(II)alamin. Cobalamin (vitamin B12) forms a complex with MTR to serve as an intermediary in methyl transfer reactions that cycles between MTR-bound methylcob(III)alamin and MTR bound-cob(I)alamin forms, and occasional oxidative escape of the cob(I)alamin intermediate during the catalytic cycle leads to the inactive cob(II)alamin species. The processing of cobalamin in the cytosol occurs in a multiprotein complex composed of at least MMACHC, MMADHC, MTRR and MTR which may contribute to shuttle safely and efficiently cobalamin towards MTR in order to produce methionine. Also necessary for the utilization of methyl groups from the folate cycle, thereby affecting transgenerational epigenetic inheritance. Also acts as a molecular chaperone for methionine synthase by stabilizing apoMTR and incorporating methylcob(III)alamin into apoMTR to form the holoenzyme. Also serves as an aquacob(III)alamin reductase by reducing aquacob(III)alamin to cob(II)alamin; this reduction leads to stimulation of the conversion of apoMTR and aquacob(III)alamin to MTR holoenzyme. The sequence is that of Methionine synthase reductase from Homo sapiens (Human).